The following is a 258-amino-acid chain: Pimeloyl-[acyl-carrier protein] methyl ester esterase (258 aa).

The 227-residue stretch at 16–242 (LVLLHGWGLN…AAHAPFISHP (227 aa)) folds into the AB hydrolase-1 domain. Substrate is bound by residues tryptophan 22, 82–83 (SM), and 143–147 (FLALQ). The active-site Nucleophile is the serine 82. Catalysis depends on residues aspartate 207 and histidine 235. Histidine 235 contacts substrate.

The protein belongs to the AB hydrolase superfamily. Carboxylesterase BioH family. In terms of assembly, monomer.

It localises to the cytoplasm. The enzyme catalyses 6-carboxyhexanoyl-[ACP] methyl ester + H2O = 6-carboxyhexanoyl-[ACP] + methanol + H(+). The protein operates within cofactor biosynthesis; biotin biosynthesis. In terms of biological role, the physiological role of BioH is to remove the methyl group introduced by BioC when the pimeloyl moiety is complete. It allows to synthesize pimeloyl-ACP via the fatty acid synthetic pathway through the hydrolysis of the ester bonds of pimeloyl-ACP esters. The sequence is that of Pimeloyl-[acyl-carrier protein] methyl ester esterase from Yersinia pseudotuberculosis serotype IB (strain PB1/+).